Reading from the N-terminus, the 283-residue chain is Thymidylate synthase (283 aa).

A dUMP-binding site is contributed by arginine 22. The active-site Nucleophile is cysteine 160. DUMP-binding positions include 180–183 (RSCD), asparagine 191, and 221–223 (HIY). Aspartate 183 contacts (6R)-5,10-methylene-5,6,7,8-tetrahydrofolate. Residue serine 282 participates in (6R)-5,10-methylene-5,6,7,8-tetrahydrofolate binding.

It belongs to the thymidylate synthase family. Bacterial-type ThyA subfamily. In terms of assembly, homodimer.

Its subcellular location is the cytoplasm. It carries out the reaction dUMP + (6R)-5,10-methylene-5,6,7,8-tetrahydrofolate = 7,8-dihydrofolate + dTMP. It participates in pyrimidine metabolism; dTTP biosynthesis. In terms of biological role, catalyzes the reductive methylation of 2'-deoxyuridine-5'-monophosphate (dUMP) to 2'-deoxythymidine-5'-monophosphate (dTMP) while utilizing 5,10-methylenetetrahydrofolate (mTHF) as the methyl donor and reductant in the reaction, yielding dihydrofolate (DHF) as a by-product. This enzymatic reaction provides an intracellular de novo source of dTMP, an essential precursor for DNA biosynthesis. This Psychromonas ingrahamii (strain DSM 17664 / CCUG 51855 / 37) protein is Thymidylate synthase.